Reading from the N-terminus, the 298-residue chain is Thymidylate synthase (298 aa).

DUMP is bound by residues Arg25 and 159–160; that span reads RR. Cys179 acts as the Nucleophile in catalysis. DUMP is bound by residues 200–203, Asn211, and 241–243; these read RSVD and HLY. Residue Asp203 participates in (6R)-5,10-methylene-5,6,7,8-tetrahydrofolate binding. Residue Ala297 participates in (6R)-5,10-methylene-5,6,7,8-tetrahydrofolate binding.

Belongs to the thymidylate synthase family. Bacterial-type ThyA subfamily. Homodimer.

The protein localises to the cytoplasm. It carries out the reaction dUMP + (6R)-5,10-methylene-5,6,7,8-tetrahydrofolate = 7,8-dihydrofolate + dTMP. It functions in the pathway pyrimidine metabolism; dTTP biosynthesis. Its function is as follows. Catalyzes the reductive methylation of 2'-deoxyuridine-5'-monophosphate (dUMP) to 2'-deoxythymidine-5'-monophosphate (dTMP) while utilizing 5,10-methylenetetrahydrofolate (mTHF) as the methyl donor and reductant in the reaction, yielding dihydrofolate (DHF) as a by-product. This enzymatic reaction provides an intracellular de novo source of dTMP, an essential precursor for DNA biosynthesis. The protein is Thymidylate synthase of Cereibacter sphaeroides (strain ATCC 17025 / ATH 2.4.3) (Rhodobacter sphaeroides).